The following is a 206-amino-acid chain: Probable NAD(+) phosphorylase Rv3189 (206 aa).

It belongs to the MbcT/ParT/Res family. Forms a heterotetramer with cognate antitoxin Rv3188.

The enzyme catalyses phosphate + NAD(+) = ADP-alpha-D-ribose 1''-phosphate + nicotinamide + H(+). Its function is as follows. Probable toxic component of a type II toxin-antitoxin (TA) system. Degrades NAD(+) by phosphorolysis. Neutralized by its cognate antitoxin Rv3188. This chain is Probable NAD(+) phosphorylase Rv3189, found in Mycobacterium tuberculosis (strain ATCC 25618 / H37Rv).